An 84-amino-acid polypeptide reads, in one-letter code: Kappa-conotoxin-like Im11.3 (84 aa).

The first 26 residues, 1–26 (MMFRLTSVSCFLLVIACLNLFQVVLT), serve as a signal peptide directing secretion. Disulfide bonds link cysteine 29/cysteine 43, cysteine 36/cysteine 48, cysteine 42/cysteine 51, and cysteine 47/cysteine 64. Residues 71–84 (LRPSHPLFLLLPAR) constitute a propeptide that is removed on maturation.

Belongs to the conotoxin I2 superfamily. As to expression, expressed by the venom duct.

Its subcellular location is the secreted. Functionally, inhibits the vertebrate voltage-gated potassium channels Kv1.1/KCNA1 and Kv1.3/KCNA3. In Conus imperialis (Imperial cone), this protein is Kappa-conotoxin-like Im11.3.